The primary structure comprises 377 residues: Protein MULTIPOLAR SPINDLE 1 (377 aa).

Residues 117 to 124 carry the Nuclear localization signal motif; sequence LRRRFLRL.

In terms of tissue distribution, expressed in roots, stems, leaves, inflorescences and seedlings. Strongly expressed in meiocytes.

It localises to the nucleus. The protein resides in the cytoplasm. It is found in the cytoskeleton. The protein localises to the spindle. Functionally, involved in meiotic spindle organization in meiocytes thus regulating chromosome segregation. Required for formation of meiotic DNA double-strand breaks (DSBs) during early recombination processes. The sequence is that of Protein MULTIPOLAR SPINDLE 1 from Arabidopsis thaliana (Mouse-ear cress).